A 355-amino-acid chain; its full sequence is MALSGILSKRVIAHRADENELEDDFSSSEELNTLGSEDDEDEDEDEDEGEGEGDESENEEAPDNASSEDDGDNDIKSSLSQISFGALAKAQQSLGPLKKGAKRKHGSEEEEEEDNKNTKYKKSKSDALNELRERIRRAKEEKASKSEGSRDNELLDKKHKEARSSKHAPAVQSSKYAVSRRRVVVDGENVAQVKSRDPRFDSAVQSYSHNAKSSSYATSHSDLAAAKNYAFLNEYRDAELKELEEKLRRSKKDDEKARLKKMITSMKDRKRAMENRERERQVLAKHRKKERELIKEGKKEKAWFLKKADLKKEALKEKYESMGAKERQKGIERRRKKVASKEKKEMPRSRRMVEG.

Disordered stretches follow at residues Met1 to Val178, Val193 to Ala217, Ile263 to Ala284, and Tyr319 to Gly355. A compositionally biased stretch (acidic residues) spans Ser36–Asp72. A coiled-coil region spans residues Glu111–Arg150. Basic and acidic residues predominate over residues Ser123–Ser164. Positions Ala203–Ala217 are enriched in polar residues. The stretch at Asn233–Lys325 forms a coiled coil. 3 stretches are compositionally biased toward basic and acidic residues: residues Arg271–Val282, Tyr319–Ile331, and Ala339–Gly355.

It belongs to the RRP36 family. As to quaternary structure, associates with 90S and pre-40S pre-ribosomal particles.

Its subcellular location is the nucleus. It is found in the nucleolus. Its function is as follows. Component of the 90S pre-ribosome involved in the maturation of rRNAs. Required for early cleavages of the pre-RNAs in the 40S ribosomal subunit maturation pathway. The chain is rRNA biogenesis protein RRP36 (RRP36) from Trichophyton verrucosum (strain HKI 0517).